The following is a 517-amino-acid chain: GMP synthase [glutamine-hydrolyzing] (517 aa).

In terms of domain architecture, Glutamine amidotransferase type-1 spans 9–199 (RILILDFGSQ…VLGVCGCERL (191 aa)). The active-site Nucleophile is the Cys-86. Residues His-173 and Glu-175 contribute to the active site. One can recognise a GMPS ATP-PPase domain in the interval 200–392 (WTSESIIEDA…LGLPYNMLYR (193 aa)). 227-233 (SGGVDSS) lines the ATP pocket.

Homodimer.

The catalysed reaction is XMP + L-glutamine + ATP + H2O = GMP + L-glutamate + AMP + diphosphate + 2 H(+). It participates in purine metabolism; GMP biosynthesis; GMP from XMP (L-Gln route): step 1/1. Functionally, catalyzes the synthesis of GMP from XMP. The chain is GMP synthase [glutamine-hydrolyzing] from Vibrio cholerae serotype O1 (strain ATCC 39541 / Classical Ogawa 395 / O395).